The sequence spans 113 residues: Hydrogenase maturation factor HypA 1 (113 aa).

Histidine 2 serves as a coordination point for Ni(2+). Zn(2+)-binding residues include cysteine 73, cysteine 76, cysteine 89, and cysteine 92.

Belongs to the HypA/HybF family.

In terms of biological role, involved in the maturation of [NiFe] hydrogenases. Required for nickel insertion into the metal center of the hydrogenase. This is Hydrogenase maturation factor HypA 1 from Bradyrhizobium diazoefficiens (strain JCM 10833 / BCRC 13528 / IAM 13628 / NBRC 14792 / USDA 110).